A 399-amino-acid polypeptide reads, in one-letter code: Nicotinate phosphoribosyltransferase (399 aa).

A Phosphohistidine; by autocatalysis modification is found at histidine 224.

Belongs to the NAPRTase family. In terms of processing, transiently phosphorylated on a His residue during the reaction cycle. Phosphorylation strongly increases the affinity for substrates and increases the rate of nicotinate D-ribonucleotide production. Dephosphorylation regenerates the low-affinity form of the enzyme, leading to product release.

The enzyme catalyses nicotinate + 5-phospho-alpha-D-ribose 1-diphosphate + ATP + H2O = nicotinate beta-D-ribonucleotide + ADP + phosphate + diphosphate. It participates in cofactor biosynthesis; NAD(+) biosynthesis; nicotinate D-ribonucleotide from nicotinate: step 1/1. In terms of biological role, catalyzes the synthesis of beta-nicotinate D-ribonucleotide from nicotinate and 5-phospho-D-ribose 1-phosphate at the expense of ATP. In Ectopseudomonas mendocina (strain ymp) (Pseudomonas mendocina), this protein is Nicotinate phosphoribosyltransferase.